Consider the following 485-residue polypeptide: Aspartyl/glutamyl-tRNA(Asn/Gln) amidotransferase subunit B (485 aa).

The protein belongs to the GatB/GatE family. GatB subfamily. As to quaternary structure, heterotrimer of A, B and C subunits.

The enzyme catalyses L-glutamyl-tRNA(Gln) + L-glutamine + ATP + H2O = L-glutaminyl-tRNA(Gln) + L-glutamate + ADP + phosphate + H(+). The catalysed reaction is L-aspartyl-tRNA(Asn) + L-glutamine + ATP + H2O = L-asparaginyl-tRNA(Asn) + L-glutamate + ADP + phosphate + 2 H(+). Allows the formation of correctly charged Asn-tRNA(Asn) or Gln-tRNA(Gln) through the transamidation of misacylated Asp-tRNA(Asn) or Glu-tRNA(Gln) in organisms which lack either or both of asparaginyl-tRNA or glutaminyl-tRNA synthetases. The reaction takes place in the presence of glutamine and ATP through an activated phospho-Asp-tRNA(Asn) or phospho-Glu-tRNA(Gln). The polypeptide is Aspartyl/glutamyl-tRNA(Asn/Gln) amidotransferase subunit B (Cupriavidus taiwanensis (strain DSM 17343 / BCRC 17206 / CCUG 44338 / CIP 107171 / LMG 19424 / R1) (Ralstonia taiwanensis (strain LMG 19424))).